The sequence spans 858 residues: KN motif and ankyrin repeat domain-containing protein 2 (858 aa).

The tract at residues 1–29 (MAQVLHVSAPFPGTPGPASPPAFPSKEPD) is disordered. Positions 1–72 (MAQVLHVSAP…AVQRRPRLGS (72 aa)) are interaction with AIFM1. Over residues 12–23 (PGTPGPASPPAF) the composition is skewed to pro residues. Residues Ser19, Ser83, Ser86, Ser89, and Ser92 each carry the phosphoserine modification. Residue Arg105 is modified to Omega-N-methylarginine. Positions 140–182 (AAPAGLGSLTPSAAGSTSSLVGVGLPPPTPRGSGLSTPVPPSA) are disordered. The span at 148 to 159 (LTPSAAGSTSSL) shows a compositional bias: polar residues. Thr168 bears the Phosphothreonine mark. 2 coiled-coil regions span residues 183–234 (GHLA…KSQK) and 282–313 (EAALAAKVAVLETQLKKALQELQAAQARQADL). Ser323 carries the post-translational modification Phosphoserine. Thr329 carries the post-translational modification Phosphothreonine. A phosphoserine mark is found at Ser356 and Ser375. Disordered stretches follow at residues 412–451 (CDGAAGHPQAPAESSLSPPESEGATQAQPEKNTGQVPAHD) and 488–590 (QKEE…SSAK). The span at 421–435 (APAESSLSPPESEGA) shows a compositional bias: low complexity. Over residues 436–446 (TQAQPEKNTGQ) the composition is skewed to polar residues. Basic and acidic residues predominate over residues 488 to 499 (QKEEPTDPEAHR). Residues 509 to 528 (GSISPRYESSSEDSSTAENF) are compositionally biased toward low complexity. Ser547 bears the Phosphoserine mark. The segment covering 555–569 (RPKETAKAKTSREES) has biased composition (basic and acidic residues). The residue at position 559 (Thr559) is a Phosphothreonine. Residues 621 to 658 (RELKVAYTTVLQEWLRLACRSDAHPELVRRHLVTFRAM) form an ANK 0; degenerate repeat. ANK repeat units follow at residues 673-703 (NGNTALHYSVSHANFPVVQQLLDSGVCQVDK), 707-740 (AGYSPIMLTALATLKTQDDIQTILQLFRLGDVNA), 745-774 (AGQTALMLAVSHGRVDVVKALLACEADVNV), 778-808 (DGSTALMCACEHGHKEITALLLAVPSCDISI), and 812-842 (DGSTALMVALDAGHSEIASMLYSRMNIKCSF). The segment at 676–842 (TALHYSVSHA…YSRMNIKCSF (167 aa)) is interaction with NCOA1.

Interacts (non-phosphorylated form) with NCOA1; NCOA2 AND NCOA3. Interacts with AIFM1. Interacts with ARHGDIA; the interaction is direct and may regulate the interaction of ARHGDIA with RHOA, RAC1 and CDC42. Interacts (via ANK repeats 1-5) with KIF21A. Post-translationally, phosphorylated by casein kinase II upon estrogen stimulation. Phosphorylation induces the release by KANK2 of NCOA1 and its translocation to the nucleus where NCOA1 can activate gene transcription.

The protein localises to the cytoplasm. Its subcellular location is the mitochondrion. In terms of biological role, involved in transcription regulation by sequestering in the cytoplasm nuclear receptor coactivators such as NCOA1, NCOA2 and NCOA3. Involved in regulation of caspase-independent apoptosis by sequestering the proapoptotic factor AIFM1 in mitochondria. Pro-apoptotic stimuli can induce its proteasomal degradation allowing the translocation of AIFM1 to the nucleus to induce apoptosis. Involved in the negative control of vitamin D receptor signaling pathway. Involved in actin stress fibers formation through its interaction with ARHGDIA and the regulation of the Rho signaling pathway. May thereby play a role in cell adhesion and migration, regulating for instance podocytes migration during development of the kidney. Through the Rho signaling pathway may also regulate cell proliferation. The polypeptide is KN motif and ankyrin repeat domain-containing protein 2 (KANK2) (Bos taurus (Bovine)).